The sequence spans 510 residues: MSKKSVKARVIKASPPTESTKQIYEDEFADSYDSNILPPPYNLKELKMIAEYSTILQQCVDAYRTNIVGFGFDFEYSFDVNSPDVTNEEKTEAESEWTKLEEFVKYLHFDESAETLLGFVIEDREKTGNGFIEVIRNGENKPAGIEYMDVQNVRVCKLSEPIEVDFTYFEQGQMKSIKREKRFRKYVQMIDGRMVYFKEYGDPRTLNLETGQYDEQTPLEKRANEVVHFKIGSGIYGKPRWIGHIVNLYGARKAEELNFMYFKQGRHIPAAITIENGMLSEDSYTQLQDYMNGLEGVENAHKFLLLEAEGIAKGKNIHGDEEIAPVKVDIKSLAEILQEDALFLEYDQKNRDKIRSAFRLPPLYTGEAQDYNRATADTARKITEEQVFQPERKLITGKLNALFLNDLEIHKVRLQLKGPDFRDPLEIAKVLTPFITAGAVSPNDLRDLAGRVLGKTLEEWPEEEYNRPLGKTNESSVSDPLAALFKSKNGTPNMIGLLKDMRDVLEDLKR.

The protein belongs to the phage portal family. PBSX subfamily.

This is an uncharacterized protein from Bacillus subtilis (strain 168).